The sequence spans 205 residues: Guanylate kinase (205 aa).

A Guanylate kinase-like domain is found at 5-184 (GLLIVLSGPS…AVQKIKGIVE (180 aa)). 12-19 (GPSGVGKG) provides a ligand contact to ATP.

It belongs to the guanylate kinase family.

The protein localises to the cytoplasm. It catalyses the reaction GMP + ATP = GDP + ADP. Its function is as follows. Essential for recycling GMP and indirectly, cGMP. The sequence is that of Guanylate kinase from Listeria innocua serovar 6a (strain ATCC BAA-680 / CLIP 11262).